Here is a 231-residue protein sequence, read N- to C-terminus: ADP-ribosylation factor-like protein 6-interacting protein 4 (231 aa).

The segment covering 1–19 (MAHVSSRKRSRSRSRSRGR) has biased composition (basic residues). The interval 1–154 (MAHVSSRKRS…EDNDGPVLTD (154 aa)) is disordered. The span at 20–34 (RGSEKRSKRSSKDSS) shows a compositional bias: basic and acidic residues. The span at 64-89 (TSRSSSSSSSSSSSSSSSSTSSSSSS) shows a compositional bias: low complexity. Over residues 92-119 (RKKRGKHKDKKKRKKKKKRKKKMKRKGK) the composition is skewed to basic residues. Ser-142 and Ser-176 each carry phosphoserine. Lys-193 is covalently cross-linked (Glycyl lysine isopeptide (Lys-Gly) (interchain with G-Cter in SUMO2)).

This sequence belongs to the ARL6IP4 family. As to quaternary structure, interacts with ARL6. Interacts with ZCCHC17. Interacts with SRSF2.

The protein resides in the nucleus. The protein localises to the nucleolus. It localises to the nucleus speckle. Functionally, involved in modulating alternative pre-mRNA splicing with either 5' distal site activation or preferential use of 3' proximal site. The polypeptide is ADP-ribosylation factor-like protein 6-interacting protein 4 (Arl6ip4) (Rattus norvegicus (Rat)).